The chain runs to 330 residues: 5'-AMP-activated protein kinase subunit gamma-1 (330 aa).

Residues 1–12 are compositionally biased toward low complexity; it reads MESVAAESAPAP. The disordered stretch occupies residues 1 to 25; sequence MESVAAESAPAPENEHSQETPESNS. CBS domains are found at residues 42–102, 124–186, and 197–259; these read PTSS…KSAL, SFKP…PKPE, and IGTY…NLDV. Residues arginine 69, 84–89, valine 129, 150–151, and lysine 169 contribute to the ADP site; these read MLTITD and HR. AMP contacts are provided by residues arginine 69, 84–89, valine 129, histidine 150, 150–151, lysine 169, threonine 199, alanine 204, 225–226, and 241–244; these read MLTITD, HR, SA, and SKFD. Residues arginine 69, 84-89, valine 129, 150-151, arginine 151, and lysine 169 contribute to the ATP site; these read MLTITD and HR. The short motif at 137–158 is the AMPK pseudosubstrate element; sequence LFDAVSSLIRNKIHRLPVIDPE. ADP is bound at residue 241-244; sequence SKFD. 241–244 is an ATP binding site; that stretch reads SKFD. Serine 260 is modified (phosphoserine; by ULK1). Threonine 262 is subject to Phosphothreonine; by ULK1. Position 268 (arginine 268) interacts with ADP. Residue arginine 268 participates in AMP binding. Position 268 (arginine 268) interacts with ATP. Serine 269 carries the post-translational modification Phosphoserine; by ULK1. Residues 271–328 form the CBS 4 domain; the sequence is YFEGVLKCYLHETLEAIINRLVEAEVHRLVVVDEHDVVKGIVSLSDILQALVLTGGEK. Residues leucine 276 and 297 to 298 contribute to the ADP site; that span reads HR. AMP contacts are provided by residues leucine 276, histidine 297, 297-298, and 313-316; these read HR and SLSD. Residues leucine 276 and 297-298 each bind ATP; that span reads HR.

The protein belongs to the 5'-AMP-activated protein kinase gamma subunit family. As to quaternary structure, AMPK is a heterotrimer of an alpha catalytic subunit (PRKAA1 or PRKAA2), a beta (PRKAB1 or PRKAB2) and a gamma non-catalytic subunits (PRKAG1, PRKAG2 or PRKAG3). Interacts with FNIP1 and FNIP2. Phosphorylated by ULK1 and ULK2; leading to negatively regulate AMPK activity and suggesting the existence of a regulatory feedback loop between ULK1, ULK2 and AMPK. There is some ambiguity for a phosphosite: Ser-260/Thr-262. In terms of processing, glycosylated; O-GlcNAcylated by OGT, promoting the AMP-activated protein kinase (AMPK) activity. Highly expressed in heart and brain, also found in kidney, white adipose tissue, lung and spleen.

Functionally, AMP/ATP-binding subunit of AMP-activated protein kinase (AMPK), an energy sensor protein kinase that plays a key role in regulating cellular energy metabolism. In response to reduction of intracellular ATP levels, AMPK activates energy-producing pathways and inhibits energy-consuming processes: inhibits protein, carbohydrate and lipid biosynthesis, as well as cell growth and proliferation. AMPK acts via direct phosphorylation of metabolic enzymes, and by longer-term effects via phosphorylation of transcription regulators. Also acts as a regulator of cellular polarity by remodeling the actin cytoskeleton; probably by indirectly activating myosin. Gamma non-catalytic subunit mediates binding to AMP, ADP and ATP, leading to activate or inhibit AMPK: AMP-binding results in allosteric activation of alpha catalytic subunit (PRKAA1 or PRKAA2) both by inducing phosphorylation and preventing dephosphorylation of catalytic subunits. ADP also stimulates phosphorylation, without stimulating already phosphorylated catalytic subunit. ATP promotes dephosphorylation of catalytic subunit, rendering the AMPK enzyme inactive. The chain is 5'-AMP-activated protein kinase subunit gamma-1 (Prkag1) from Rattus norvegicus (Rat).